The sequence spans 585 residues: A-type ATP synthase subunit A (585 aa).

Residue 231 to 238 (GPFGSGKT) coordinates ATP.

Belongs to the ATPase alpha/beta chains family. Has multiple subunits with at least A(3), B(3), C, D, E, F, H, I and proteolipid K(x).

The protein resides in the cell membrane. The catalysed reaction is ATP + H2O + 4 H(+)(in) = ADP + phosphate + 5 H(+)(out). Its function is as follows. Component of the A-type ATP synthase that produces ATP from ADP in the presence of a proton gradient across the membrane. The A chain is the catalytic subunit. This chain is A-type ATP synthase subunit A, found in Thermococcus gammatolerans (strain DSM 15229 / JCM 11827 / EJ3).